Consider the following 208-residue polypeptide: Guanylate kinase (208 aa).

The Guanylate kinase-like domain maps to 5–184; sequence GLLIVFSGPS…AAERVKCVIE (180 aa). 12 to 19 serves as a coordination point for ATP; it reads GPSGVGKG.

It belongs to the guanylate kinase family.

The protein resides in the cytoplasm. It catalyses the reaction GMP + ATP = GDP + ADP. In terms of biological role, essential for recycling GMP and indirectly, cGMP. The chain is Guanylate kinase from Streptococcus pneumoniae (strain ATCC BAA-255 / R6).